We begin with the raw amino-acid sequence, 688 residues long: Homoaconitase, mitochondrial (688 aa).

Residues 1 to 19 constitute a mitochondrion transit peptide; that stretch reads MALLYLSTRSSLKKTGARC. The [4Fe-4S] cluster site is built by Cys346, Cys406, and Cys409.

This sequence belongs to the aconitase/IPM isomerase family. [4Fe-4S] cluster is required as a cofactor.

The protein localises to the mitochondrion. The enzyme catalyses (2R,3S)-homoisocitrate = cis-homoaconitate + H2O. The protein operates within amino-acid biosynthesis; L-lysine biosynthesis via AAA pathway; L-alpha-aminoadipate from 2-oxoglutarate: step 3/5. Its function is as follows. Catalyzes the reversible hydration of cis-homoaconitate to (2R,3S)-homoisocitrate, a step in the alpha-aminoadipate pathway for lysine biosynthesis. The polypeptide is Homoaconitase, mitochondrial (LYS4) (Debaryomyces hansenii (strain ATCC 36239 / CBS 767 / BCRC 21394 / JCM 1990 / NBRC 0083 / IGC 2968) (Yeast)).